Consider the following 392-residue polypeptide: Galactokinase (392 aa).

Residues R37, E43, H44, and D46 each coordinate alpha-D-galactose. Residues G136, G138, S140, and S141 each contribute to the ATP site. D186 contacts alpha-D-galactose. The active-site Proton acceptor is the D186. Residue S230 is modified to Phosphoserine. Residue Y236 coordinates alpha-D-galactose.

The protein belongs to the GHMP kinase family. GalK subfamily. As to quaternary structure, homodimer.

The enzyme catalyses alpha-D-galactose + ATP = alpha-D-galactose 1-phosphate + ADP + H(+). It functions in the pathway carbohydrate metabolism; galactose metabolism. Functionally, catalyzes the transfer of a phosphate from ATP to alpha-D-galactose and participates in the first committed step in the catabolism of galactose. The sequence is that of Galactokinase (GALK1) from Canis lupus familiaris (Dog).